The following is a 266-amino-acid chain: Ras-like protein family member 12 (266 aa).

Residues 27–34, 74–78, and 134–137 each bind GTP; these read GRRGAGKS, DTADL, and NKLD.

This sequence belongs to the small GTPase superfamily. Ras family.

The catalysed reaction is GTP + H2O = GDP + phosphate + H(+). The sequence is that of Ras-like protein family member 12 (RASL12) from Homo sapiens (Human).